Reading from the N-terminus, the 557-residue chain is Dihydroxy-acid dehydratase (557 aa).

Cysteine 49 contributes to the [2Fe-2S] cluster binding site. Residue aspartate 81 coordinates Mg(2+). Cysteine 122 is a binding site for [2Fe-2S] cluster. Aspartate 123 and lysine 124 together coordinate Mg(2+). N6-carboxylysine is present on lysine 124. [2Fe-2S] cluster is bound at residue cysteine 194. A Mg(2+)-binding site is contributed by glutamate 446. Catalysis depends on serine 472, which acts as the Proton acceptor.

The protein belongs to the IlvD/Edd family. Homodimer. The cofactor is [2Fe-2S] cluster. Mg(2+) is required as a cofactor.

It carries out the reaction (2R)-2,3-dihydroxy-3-methylbutanoate = 3-methyl-2-oxobutanoate + H2O. The catalysed reaction is (2R,3R)-2,3-dihydroxy-3-methylpentanoate = (S)-3-methyl-2-oxopentanoate + H2O. Its pathway is amino-acid biosynthesis; L-isoleucine biosynthesis; L-isoleucine from 2-oxobutanoate: step 3/4. It functions in the pathway amino-acid biosynthesis; L-valine biosynthesis; L-valine from pyruvate: step 3/4. In terms of biological role, functions in the biosynthesis of branched-chain amino acids. Catalyzes the dehydration of (2R,3R)-2,3-dihydroxy-3-methylpentanoate (2,3-dihydroxy-3-methylvalerate) into 2-oxo-3-methylpentanoate (2-oxo-3-methylvalerate) and of (2R)-2,3-dihydroxy-3-methylbutanoate (2,3-dihydroxyisovalerate) into 2-oxo-3-methylbutanoate (2-oxoisovalerate), the penultimate precursor to L-isoleucine and L-valine, respectively. The sequence is that of Dihydroxy-acid dehydratase from Prochlorococcus marinus (strain MIT 9215).